A 124-amino-acid polypeptide reads, in one-letter code: Protein S100-A16 (124 aa).

The EF-hand 1; degenerate domain maps to 23–37; sequence VSKHSLVKNKISKSS. The 36-residue stretch at 54-89 folds into the EF-hand 2 domain; it reads GNRKAADKLIQNLDANHDGRICFDEYWTMIGGITSP. 5 residues coordinate Ca(2+): D67, N69, D71, R73, and E78. Positions 97–124 are disordered; sequence QECQQESQQECQQESQQESQQESQQGSS.

It belongs to the S-100 family. In terms of assembly, homodimer. Interacts with TP53. In terms of tissue distribution, ubiquitous. Widely distributed throughout the adult brain and predominantly expressed within specific astrocyte populations. Expressed at high level in adipose tissues of obese animals.

The protein localises to the nucleus. The protein resides in the nucleolus. Its subcellular location is the cytoplasm. Functionally, calcium-binding protein. Binds one calcium ion per monomer. Can promote differentiation of adipocytes (in vitro). Overexpression in 3T3-L1 preadipocytes increases their proliferation, enhances adipogenesis and reduces insulin-stimulated glucose uptake. This Mus musculus (Mouse) protein is Protein S100-A16.